Consider the following 555-residue polypeptide: Glucosylglycerate phosphorylase (555 aa).

The Nucleophile role is filled by aspartate 231.

Belongs to the glycosyl hydrolase 13 family. Glucosylglycerate phosphorylase subfamily.

It carries out the reaction (2R)-2-O-(alpha-D-glucopyranosyl)-glycerate + phosphate = (R)-glycerate + alpha-D-glucose 1-phosphate. Functionally, catalyzes the reversible phosphorolysis of glucosylglycerate into alpha-D-glucose 1-phosphate (Glc1P) and D-glycerate. May be a regulator of intracellular levels of glucosylglycerate, a compatible solute that primarily protects organisms facing salt stress and very specific nutritional constraints. Has a very strict substrate specificity. Cannot catalyze the phosphorolysis of sucrose or synthesize sucrose from Glc1P and D-fructose. This is Glucosylglycerate phosphorylase from Allomeiothermus silvanus (strain ATCC 700542 / DSM 9946 / NBRC 106475 / NCIMB 13440 / VI-R2) (Thermus silvanus).